The following is a 55-amino-acid chain: Large ribosomal subunit protein bL33 (55 aa).

The protein belongs to the bacterial ribosomal protein bL33 family.

The chain is Large ribosomal subunit protein bL33 from Allorhizobium ampelinum (strain ATCC BAA-846 / DSM 112012 / S4) (Agrobacterium vitis (strain S4)).